The chain runs to 314 residues: Ribosomal RNA small subunit methyltransferase H (314 aa).

S-adenosyl-L-methionine contacts are provided by residues 58 to 60 (GGH), Asp-76, Phe-103, Asp-119, and Gln-126.

It belongs to the methyltransferase superfamily. RsmH family.

It is found in the cytoplasm. It carries out the reaction cytidine(1402) in 16S rRNA + S-adenosyl-L-methionine = N(4)-methylcytidine(1402) in 16S rRNA + S-adenosyl-L-homocysteine + H(+). Functionally, specifically methylates the N4 position of cytidine in position 1402 (C1402) of 16S rRNA. This Gloeobacter violaceus (strain ATCC 29082 / PCC 7421) protein is Ribosomal RNA small subunit methyltransferase H.